We begin with the raw amino-acid sequence, 172 residues long: 3-hydroxydecanoyl-[acyl-carrier-protein] dehydratase (172 aa).

His-71 is an active-site residue.

This sequence belongs to the thioester dehydratase family. FabA subfamily. In terms of assembly, homodimer.

Its subcellular location is the cytoplasm. The enzyme catalyses a (3R)-hydroxyacyl-[ACP] = a (2E)-enoyl-[ACP] + H2O. It carries out the reaction (3R)-hydroxydecanoyl-[ACP] = (2E)-decenoyl-[ACP] + H2O. It catalyses the reaction (2E)-decenoyl-[ACP] = (3Z)-decenoyl-[ACP]. It functions in the pathway lipid metabolism; fatty acid biosynthesis. In terms of biological role, necessary for the introduction of cis unsaturation into fatty acids. Catalyzes the dehydration of (3R)-3-hydroxydecanoyl-ACP to E-(2)-decenoyl-ACP and then its isomerization to Z-(3)-decenoyl-ACP. Can catalyze the dehydratase reaction for beta-hydroxyacyl-ACPs with saturated chain lengths up to 16:0, being most active on intermediate chain length. This chain is 3-hydroxydecanoyl-[acyl-carrier-protein] dehydratase, found in Enterobacter sp. (strain 638).